The chain runs to 156 residues: Small ribosomal subunit protein uS7 (156 aa).

The protein belongs to the universal ribosomal protein uS7 family. Part of the 30S ribosomal subunit. Contacts proteins S9 and S11.

One of the primary rRNA binding proteins, it binds directly to 16S rRNA where it nucleates assembly of the head domain of the 30S subunit. Is located at the subunit interface close to the decoding center, probably blocks exit of the E-site tRNA. This is Small ribosomal subunit protein uS7 from Brucella abortus (strain S19).